The following is a 142-amino-acid chain: Large ribosomal subunit protein uL13 (142 aa).

This sequence belongs to the universal ribosomal protein uL13 family. As to quaternary structure, part of the 50S ribosomal subunit.

In terms of biological role, this protein is one of the early assembly proteins of the 50S ribosomal subunit, although it is not seen to bind rRNA by itself. It is important during the early stages of 50S assembly. This chain is Large ribosomal subunit protein uL13, found in Geobacter sp. (strain M21).